The chain runs to 171 residues: 3-hydroxydecanoyl-[acyl-carrier-protein] dehydratase (171 aa).

Residue His-71 is part of the active site.

This sequence belongs to the thioester dehydratase family. FabA subfamily. Homodimer.

It localises to the cytoplasm. It catalyses the reaction a (3R)-hydroxyacyl-[ACP] = a (2E)-enoyl-[ACP] + H2O. The enzyme catalyses (3R)-hydroxydecanoyl-[ACP] = (2E)-decenoyl-[ACP] + H2O. It carries out the reaction (2E)-decenoyl-[ACP] = (3Z)-decenoyl-[ACP]. Its pathway is lipid metabolism; fatty acid biosynthesis. Necessary for the introduction of cis unsaturation into fatty acids. Catalyzes the dehydration of (3R)-3-hydroxydecanoyl-ACP to E-(2)-decenoyl-ACP and then its isomerization to Z-(3)-decenoyl-ACP. Can catalyze the dehydratase reaction for beta-hydroxyacyl-ACPs with saturated chain lengths up to 16:0, being most active on intermediate chain length. This Rhizobium meliloti (strain 1021) (Ensifer meliloti) protein is 3-hydroxydecanoyl-[acyl-carrier-protein] dehydratase.